Consider the following 887-residue polypeptide: Bifunctional uridylyltransferase/uridylyl-removing enzyme (887 aa).

The segment at 1 to 337 (MINTSPLLNY…RLPNYERKIE (337 aa)) is uridylyltransferase. A uridylyl-removing region spans residues 339-699 (VNDHFKIVDN…AHRKAAQDAV (361 aa)). The HD domain maps to 457 to 579 (VDAHTLLLLR…LGDMEHLDYL (123 aa)). ACT domains lie at 700-782 (QIFI…LMQR) and 809-887 (MVEI…ICQH).

This sequence belongs to the GlnD family. Mg(2+) is required as a cofactor.

It carries out the reaction [protein-PII]-L-tyrosine + UTP = [protein-PII]-uridylyl-L-tyrosine + diphosphate. The catalysed reaction is [protein-PII]-uridylyl-L-tyrosine + H2O = [protein-PII]-L-tyrosine + UMP + H(+). Uridylyltransferase (UTase) activity is inhibited by glutamine, while glutamine activates uridylyl-removing (UR) activity. Functionally, modifies, by uridylylation and deuridylylation, the PII regulatory proteins (GlnB and homologs), in response to the nitrogen status of the cell that GlnD senses through the glutamine level. Under low glutamine levels, catalyzes the conversion of the PII proteins and UTP to PII-UMP and PPi, while under higher glutamine levels, GlnD hydrolyzes PII-UMP to PII and UMP (deuridylylation). Thus, controls uridylylation state and activity of the PII proteins, and plays an important role in the regulation of nitrogen assimilation and metabolism. The chain is Bifunctional uridylyltransferase/uridylyl-removing enzyme from Acinetobacter baumannii (strain AB307-0294).